A 379-amino-acid chain; its full sequence is Cytochrome b (379 aa).

A run of 4 helical transmembrane segments spans residues 33 to 53, 77 to 98, 113 to 133, and 178 to 198; these read FGSLLGICLILQILTGLFLAM, WMIRYMHANGASLFFICLFMHV, WNIGILLLLTVMATAFMGYVL, and FFAFHFILPFIISALAAVHLL. Positions 83 and 97 each coordinate heme b. 2 residues coordinate heme b: His-182 and His-196. His-201 contacts a ubiquinone. A run of 4 helical transmembrane segments spans residues 226–246, 288–308, 320–340, and 347–367; these read IKDILGLLFLILALMLLVLFS, LGGVLPHAMSILILPIIPMLH, LSQCMFWLLVADLPILTWIGG, and FITIGQLASVYISSILLXLMP.

The protein belongs to the cytochrome b family. The cytochrome bc1 complex contains 11 subunits: 3 respiratory subunits (MT-CYB, CYC1 and UQCRFS1), 2 core proteins (UQCRC1 and UQCRC2) and 6 low-molecular weight proteins (UQCRH/QCR6, UQCRB/QCR7, UQCRQ/QCR8, UQCR10/QCR9, UQCR11/QCR10 and a cleavage product of UQCRFS1). This cytochrome bc1 complex then forms a dimer. It depends on heme b as a cofactor.

Its subcellular location is the mitochondrion inner membrane. In terms of biological role, component of the ubiquinol-cytochrome c reductase complex (complex III or cytochrome b-c1 complex) that is part of the mitochondrial respiratory chain. The b-c1 complex mediates electron transfer from ubiquinol to cytochrome c. Contributes to the generation of a proton gradient across the mitochondrial membrane that is then used for ATP synthesis. The chain is Cytochrome b (MT-CYB) from Chrotogale owstoni (Owston's palm civet).